The chain runs to 931 residues: Beta-mannosidase A (931 aa).

An N-terminal signal peptide occupies residues 1–21; the sequence is MRHSIGLAAALLAPTLPVALG. N-linked (GlcNAc...) asparagine glycans are attached at residues Asn-40, Asn-79, Asn-247, Asn-282, and Asn-347. The Proton donor role is filled by Glu-479. N-linked (GlcNAc...) asparagine glycans are attached at residues Asn-550, Asn-608, Asn-658, Asn-738, Asn-790, Asn-798, Asn-830, and Asn-918.

It belongs to the glycosyl hydrolase 2 family. Beta-mannosidase A subfamily. Homodimer. Post-translationally, N-glycosylated.

The protein resides in the secreted. The enzyme catalyses Hydrolysis of terminal, non-reducing beta-D-mannose residues in beta-D-mannosides.. The protein operates within glycan metabolism; N-glycan degradation. Exoglycosidase that cleaves the single beta-linked mannose residue from the non-reducing end of beta-mannosidic oligosaccharides of various complexity and length. Involved in the degradation of polymeric mannan and galactomannan. Releases the terminal mannose residue from mannobiose and mannotriose, as well as from galactosyl-mannobiose (GM2), galactosyl-mannotriose (GM3) and di-galactosyl-mannopentaose (G2M5). The sequence is that of Beta-mannosidase A (mndA) from Aspergillus niger.